The following is a 78-amino-acid chain: TP53-regulated inhibitor of apoptosis 1-A (78 aa).

Positions M1–I52 form a coiled coil. The CHCH domain occupies G5–K55. Short sequence motifs (cx9C motif) lie at residues C8–C18 and C37–C47. Disulfide bonds link C8–C47 and C18–C37.

Belongs to the TRIAP1/MDM35 family. Monomer. Forms a complex with prelid1 in the mitochondrion intermembrane space. Interacts with prelid3a.

The protein resides in the mitochondrion. The protein localises to the mitochondrion intermembrane space. It carries out the reaction a 1,2-diacyl-sn-glycero-3-phosphate(in) = a 1,2-diacyl-sn-glycero-3-phosphate(out). In terms of biological role, involved in the modulation of the mitochondrial apoptotic pathway by ensuring the accumulation of cardiolipin (CL) in mitochondrial membranes. The triap1:prelid1 complex probably functions as a phosphatidic acid (PA) transporter across the mitochondrion intermembrane space to provide PA for cardiolipin CL synthesis in the inner membrane. Likewise, the triap1:prelid3a complex mediates the transfer of phosphatidic acid (PA) between liposomes (in vitro) and probably functions as a PA transporter across the mitochondrion intermembrane space (in vivo). Mediates cell survival by inhibiting activation of caspase-9 which prevents induction of apoptosis. Required for pronephros development; probably involved at an early stage in the formation of pronephric components derived from the somatic layer. The polypeptide is TP53-regulated inhibitor of apoptosis 1-A (triap1-a) (Xenopus laevis (African clawed frog)).